The primary structure comprises 331 residues: Thioredoxin-like fold domain-containing protein MRL7, chloroplastic (331 aa).

Residues 1–59 (MSFFAVACSAPRSSMLLTGLNSSFSDMHRSPLFVFPVTISSRSVKRFAAVSSDSVLDPE) constitute a chloroplast transit peptide. 2 disordered regions span residues 52–105 (SDSV…ADAV) and 141–160 (GVDEEEEEEEEMVVEEEDPD). The segment covering 142–160 (VDEEEEEEEEMVVEEEDPD) has biased composition (acidic residues).

Component of the transcriptionally active chromosome (TAC) complexes. Interacts with FSD2 and PRDA1. Interacts with FSD3 and CITRX/TRXZ. Binds to PTAC12/HMR/PAP5. Expressed in leaves, shoots, stems, cauline leaves, flower buds, flowers and siliques.

It is found in the plastid. The protein resides in the chloroplast. It localises to the chloroplast stroma. Its subcellular location is the chloroplast nucleoid. The protein localises to the nucleus. In terms of biological role, plays an essential role in early steps of chloroplast development. Involved in the regulation of plastid gene expression. May positively regulate plastid-encoded RNA polymerase (PEP) activity through binding to FSD3 and CITRX/TRXZ. Involved in redox-mediated regulation of chloroplast development. Possesses disulfide reductase activity in vitro. Required for the proper function of the plastid transcriptional machinery and protein accumulation in thylakoid membranes. May function as molecular chaperone to ensure proper organization of the nucleoids in chloroplasts. May mediate some aspect of thylakoid structure or function that controls non-photochemical quenching (NPQ). Participates in the early light signaling events of photobody biogenesis in chloroplasts. May mediate the degradation of two repressors of chloroplast biogenesis, PIF1 and PIF3 in nucleus. Collaboratively with PTAC12/HMR/PAP5, involved in the regulation of thermoresponsive responses via the stabilization of PIF4 in the daytime to initiate thermomorphogenesis. This chain is Thioredoxin-like fold domain-containing protein MRL7, chloroplastic, found in Arabidopsis thaliana (Mouse-ear cress).